The sequence spans 474 residues: tRNA-2-methylthio-N(6)-dimethylallyladenosine synthase (474 aa).

The MTTase N-terminal domain maps to 3 to 120 (KKLHIKTWGC…LPDMIEQVRR (118 aa)). 6 residues coordinate [4Fe-4S] cluster: C12, C49, C83, C157, C161, and C164. Positions 143 to 375 (RAEGPTAFVS…QDRITQQAMR (233 aa)) constitute a Radical SAM core domain. The TRAM domain maps to 378–441 (RHMMGTVQRI…TNSLRGKFIR (64 aa)).

The protein belongs to the methylthiotransferase family. MiaB subfamily. As to quaternary structure, monomer. [4Fe-4S] cluster is required as a cofactor.

Its subcellular location is the cytoplasm. It carries out the reaction N(6)-dimethylallyladenosine(37) in tRNA + (sulfur carrier)-SH + AH2 + 2 S-adenosyl-L-methionine = 2-methylsulfanyl-N(6)-dimethylallyladenosine(37) in tRNA + (sulfur carrier)-H + 5'-deoxyadenosine + L-methionine + A + S-adenosyl-L-homocysteine + 2 H(+). In terms of biological role, catalyzes the methylthiolation of N6-(dimethylallyl)adenosine (i(6)A), leading to the formation of 2-methylthio-N6-(dimethylallyl)adenosine (ms(2)i(6)A) at position 37 in tRNAs that read codons beginning with uridine. This chain is tRNA-2-methylthio-N(6)-dimethylallyladenosine synthase, found in Shewanella sp. (strain MR-7).